We begin with the raw amino-acid sequence, 166 residues long: Lipoprotein signal peptidase (166 aa).

The next 4 helical transmembrane spans lie at 9 to 29, 45 to 65, 71 to 91, and 99 to 119; these read ASGA…FDQL, ALTS…FGFL, WQRW…CYLL, and LFSL…IDRL. Catalysis depends on residues Asp126 and Asp144. The chain crosses the membrane as a helical span at residues 135-155; sequence WHFPAFNLADSAITVGAVLLI.

This sequence belongs to the peptidase A8 family.

Its subcellular location is the cell inner membrane. The catalysed reaction is Release of signal peptides from bacterial membrane prolipoproteins. Hydrolyzes -Xaa-Yaa-Zaa-|-(S,diacylglyceryl)Cys-, in which Xaa is hydrophobic (preferably Leu), and Yaa (Ala or Ser) and Zaa (Gly or Ala) have small, neutral side chains.. Its pathway is protein modification; lipoprotein biosynthesis (signal peptide cleavage). In terms of biological role, this protein specifically catalyzes the removal of signal peptides from prolipoproteins. This is Lipoprotein signal peptidase from Burkholderia vietnamiensis (strain G4 / LMG 22486) (Burkholderia cepacia (strain R1808)).